The chain runs to 164 residues: Lipoprotein signal peptidase (164 aa).

The next 4 membrane-spanning stretches (helical) occupy residues 11–31, 41–61, 64–84, and 92–112; these read YWVL…AVLS, VIPS…FSFL, QGGW…AYLV, and FATL…GNVI. Active-site residues include Asp122 and Asp140. Residues 132–152 form a helical membrane-spanning segment; that stretch reads FYPAFNIADSFICVGAVLAVL.

It belongs to the peptidase A8 family.

Its subcellular location is the cell inner membrane. The catalysed reaction is Release of signal peptides from bacterial membrane prolipoproteins. Hydrolyzes -Xaa-Yaa-Zaa-|-(S,diacylglyceryl)Cys-, in which Xaa is hydrophobic (preferably Leu), and Yaa (Ala or Ser) and Zaa (Gly or Ala) have small, neutral side chains.. It functions in the pathway protein modification; lipoprotein biosynthesis (signal peptide cleavage). In terms of biological role, this protein specifically catalyzes the removal of signal peptides from prolipoproteins. The polypeptide is Lipoprotein signal peptidase (Neisseria meningitidis serogroup C (strain 053442)).